The primary structure comprises 352 residues: Sortase SrtE1 (352 aa).

Basic and acidic residues-rich tracts occupy residues 1–10 (MTALRPERDS) and 34–45 (RYEESAAGEENR). Residues 1-132 (MTALRPERDS…RQARARKPGA (132 aa)) are disordered. Residues 1-139 (MTALRPERDS…PGAAVVASRA (139 aa)) are Cytoplasmic-facing. The segment at 15-79 (DQGSSYGQPY…TGPIGGGPDG (65 aa)) is required for protein stability. Residues 71 to 82 (GPIGGGPDGGGR) show a composition bias toward gly residues. Residues 83–97 (AARRKAAKRRHGRRG) are compositionally biased toward basic residues. The helical transmembrane segment at 140–160 (IGEIFITTGVLMLLFVTYQLW) threads the bilayer. The Extracellular segment spans residues 161 to 352 (WTNVRAHAQA…SKGKPDALVS (192 aa)). Active-site residues include His251 and Cys320. Catalysis depends on Arg329, which acts as the Proton donor.

Belongs to the bacterial sortase family. Class E subfamily.

The protein resides in the cell membrane. It carries out the reaction The enzyme catalyzes a cell wall sorting reaction in which a surface protein with a sorting signal containing a LPXTG motif is cleaved between the Thr and Gly residue. The resulting threonine carboxyl end of the protein is covalently attached to a pentaglycine cross-bridge of peptidoglycan.. Its function is as follows. Transpeptidase that anchors surface proteins to the cell wall. Recognizes both Leu-Ala-x-Thr-Gly and Leu-Pro-x-Thr-Gly, with a preference for the former. Unlike the S.aureus sortase it cleaves not only the Thr-Gly motif but also the Ala-X bond; Ala-Glu and Ala-His bonds are better substrates than the Thr-Gly motif in vitro. Among its possible substrates are the chaplins ChpA, ChpB and ChpC; this enzyme is less important for ChpC attachment than is SrtE2. A double knockout mutant of srtE1 and srtE2 shows a developmental defect in aerial hyphae formation more dramatic than that due to chaplin deletion. In Streptomyces coelicolor (strain ATCC BAA-471 / A3(2) / M145), this protein is Sortase SrtE1.